A 295-amino-acid polypeptide reads, in one-letter code: MAPSNLPPVFNATSQDIEMLLAAQCHLGSKNLQVHMEPYLWKTRPDGINVINIGKTWEKIVLAARIIAAIDNPADICVISARPYGQRAVLKFAAHTGAVAIAGRFTPGNFTNYITRSFKEPRLIIVTDPRTDSQAIKEASYVNIPVIALCDTDSPTEFVDVAIPTNNKGRHAIGLIWWMLAREVLRLRGTLANRETEWDVVVDLYFYRDPEAEENKEVEETKVPGAEEVGAGAIESGFVGDSWQAQATPGFSAGVAAPGTAVPGWEAEVSTDWAASSAPAAETLADPAADPSVKW.

A disordered region spans residues 273–295 (WAASSAPAAETLADPAADPSVKW). The segment covering 274 to 295 (AASSAPAAETLADPAADPSVKW) has biased composition (low complexity).

It belongs to the universal ribosomal protein uS2 family. Component of the small ribosomal subunit. Mature ribosomes consist of a small (40S) and a large (60S) subunit. The 40S subunit contains about 33 different proteins and 1 molecule of RNA (18S). The 60S subunit contains about 49 different proteins and 3 molecules of RNA (25S, 5.8S and 5S). Interacts with RPS21.

Its subcellular location is the cytoplasm. Required for the assembly and/or stability of the 40S ribosomal subunit. Required for the processing of the 20S rRNA-precursor to mature 18S rRNA in a late step of the maturation of 40S ribosomal subunits. The chain is Small ribosomal subunit protein uS2 from Paracoccidioides lutzii (strain ATCC MYA-826 / Pb01) (Paracoccidioides brasiliensis).